A 244-amino-acid polypeptide reads, in one-letter code: Probable transcriptional regulatory protein XF_1906 (244 aa).

Belongs to the TACO1 family.

It localises to the cytoplasm. In Xylella fastidiosa (strain 9a5c), this protein is Probable transcriptional regulatory protein XF_1906.